A 263-amino-acid polypeptide reads, in one-letter code: Ribosomal RNA small subunit methyltransferase A (263 aa).

S-adenosyl-L-methionine is bound by residues histidine 13, leucine 15, glycine 40, glutamate 61, aspartate 86, and asparagine 105.

The protein belongs to the class I-like SAM-binding methyltransferase superfamily. rRNA adenine N(6)-methyltransferase family. RsmA subfamily.

It localises to the cytoplasm. It catalyses the reaction adenosine(1518)/adenosine(1519) in 16S rRNA + 4 S-adenosyl-L-methionine = N(6)-dimethyladenosine(1518)/N(6)-dimethyladenosine(1519) in 16S rRNA + 4 S-adenosyl-L-homocysteine + 4 H(+). Functionally, specifically dimethylates two adjacent adenosines (A1518 and A1519) in the loop of a conserved hairpin near the 3'-end of 16S rRNA in the 30S particle. May play a critical role in biogenesis of 30S subunits. The polypeptide is Ribosomal RNA small subunit methyltransferase A (Dichelobacter nodosus (strain VCS1703A)).